Consider the following 308-residue polypeptide: D-alanine--D-alanine ligase (308 aa).

An ATP-grasp domain is found at 103–302 (KTVMKTAGVP…FDELVQWMVE (200 aa)). Residue 130 to 184 (MEPPYVIKPVADGSSVGVYIITEQHQHPPQELFRDDWAYGDKLLVEKYVAGKELT) participates in ATP binding. 3 residues coordinate Mg(2+): Asp252, Glu269, and Asn271.

Belongs to the D-alanine--D-alanine ligase family. Mg(2+) is required as a cofactor. Requires Mn(2+) as cofactor.

It is found in the cytoplasm. It catalyses the reaction 2 D-alanine + ATP = D-alanyl-D-alanine + ADP + phosphate + H(+). It functions in the pathway cell wall biogenesis; peptidoglycan biosynthesis. In terms of biological role, cell wall formation. In Rhodopseudomonas palustris (strain BisA53), this protein is D-alanine--D-alanine ligase.